Consider the following 37-residue polypeptide: M-oxotoxin-Ot2a (37 aa).

As to expression, expressed by the venom gland.

Its subcellular location is the secreted. Functionally, disrupts biological membranes, particularly those rich in phosphocholine. Has antimicrobial activity against Gram-negative bacterium E.coli, Gram-positive bacteria B.subtilis and S.aureus, and hemolytic activity against sheep, pig and guinea pig red blood cells. Has insecticidal activity against S.frugiperda ovarian cells by opening non-selective ion channels. Enhances the insecticidal activity of spider venom neurotoxic peptides. In Oxyopes takobius (Lynx spider), this protein is M-oxotoxin-Ot2a.